A 604-amino-acid polypeptide reads, in one-letter code: MEPPRGPPVSGAEPSRAVGTVKVYLPNKQRTVVTVREGMSVYDSLDKALKVRGLNQDCCVVYRLIKGRKTVTAWDTAIAPLDGEELIVEVLEDVPLTMHNFVRKTFFSLAFCDFCLKFLFHGFRCQTCGYKFHQHCSSKVPTVCVDMSTNRRQFYHSIQDLSGGSRQQEAPSNLSVNELLTPQGPSPFTQQRDQEHFSFPAPANPPLQRIRSTSTPNVHMVSTTAPMDSSLMQFTAQSFSTDAAGRGGDGAPRGSPSPASVSSGRKSPHSKLPSEQRERKSLADEKKKVKNLGYRDSGYYWEVPPSEVQLLKRIGTGSFGTVFRGRWHGDVAVKVLKVAQPTAEQAQAFKNEMQVLRKTRHVNILLFMGFMTRPGFAIITQWCEGSSLYHHLHVADTRFDMVQLIDVARQTAQGMDYLHAKNIIHRDLKSNNIFLHEGLTVKIGDFGLATVKTRWSGAQPLEQPSGSVLWMAAEVIRMQDPNPYSFQSDVYAYGVVLYELMTGSLPYSHIGSRDQIIFMVGRGYLSPDLSKIFSNCPKAMRRLLTDCLKFQREERPLFPQILATIELLQRSLPKIERSASEPSLHRTQADELPACLLSAARLVP.

Residues 19–91 (GTVKVYLPNK…DGEELIVEVL (73 aa)) form the RBD domain. The segment at 98 to 144 (MHNFVRKTFFSLAFCDFCLKFLFHGFRCQTCGYKFHQHCSSKVPTVC) adopts a Phorbol-ester/DAG-type zinc-finger fold. Positions 99, 112, 115, 125, 128, 133, 136, and 144 each coordinate Zn(2+). A phosphoserine mark is found at Ser-157 and Ser-162. Disordered stretches follow at residues 177–222 (NELL…HMVS) and 241–288 (TDAA…EKKK). Thr-181 is modified (phosphothreonine). Ser-186 carries the post-translational modification Phosphoserine. Positions 210–222 (IRSTSTPNVHMVS) are enriched in polar residues. Residues 252–265 (PRGSPSPASVSSGR) show a composition bias toward low complexity. Ser-255 and Ser-267 each carry phosphoserine. The segment covering 272–287 (LPSEQRERKSLADEKK) has biased composition (basic and acidic residues). In terms of domain architecture, Protein kinase spans 308 to 568 (VQLLKRIGTG…PQILATIELL (261 aa)). ATP contacts are provided by residues 314–322 (IGTGSFGTV) and Lys-334. Thr-316 bears the Phosphothreonine mark. Residue Asp-427 is the Proton acceptor of the active site.

Belongs to the protein kinase superfamily. TKL Ser/Thr protein kinase family. RAF subfamily. Interacts with TH1L/NELFD. Zn(2+) is required as a cofactor. Post-translationally, dephosphorylation by the SHOC2-MRAS-PP1c (SMP) complex consisting of SHOC2, GTP-bound M-Ras/MRAS and the catalytic subunit of protein phosphatase 1 (PPP1CA, PPP1CB or PPP1CC); this relieves inactivation and stimulates kinase activity.

The catalysed reaction is L-seryl-[protein] + ATP = O-phospho-L-seryl-[protein] + ADP + H(+). It catalyses the reaction L-threonyl-[protein] + ATP = O-phospho-L-threonyl-[protein] + ADP + H(+). Functionally, involved in the transduction of mitogenic signals from the cell membrane to the nucleus. May also regulate the TOR signaling cascade. Phosphorylates PFKFB2. This is Serine/threonine-protein kinase A-Raf (Araf) from Mus musculus (Mouse).